We begin with the raw amino-acid sequence, 217 residues long: Large ribosomal subunit protein uL4 (217 aa).

A disordered region spans residues 42–100; that stretch reads RAAARQGTHSTKTRGDVSGGGRKPYRQKGTGRARQGSTRAPQFTGGGVVHGPKPRDYSQ.

The protein belongs to the universal ribosomal protein uL4 family. In terms of assembly, part of the 50S ribosomal subunit.

Its function is as follows. One of the primary rRNA binding proteins, this protein initially binds near the 5'-end of the 23S rRNA. It is important during the early stages of 50S assembly. It makes multiple contacts with different domains of the 23S rRNA in the assembled 50S subunit and ribosome. Forms part of the polypeptide exit tunnel. The protein is Large ribosomal subunit protein uL4 of Mycobacterium avium (strain 104).